Here is a 265-residue protein sequence, read N- to C-terminus: Dimethylsulfide dehydrogenase subunit gamma (265 aa).

An N-terminal signal peptide occupies residues 1 to 25; the sequence is MPGFRFLLAATAAFLATSPALPLSA. Residues H81 and M147 each contribute to the heme b site.

In terms of assembly, heterotrimer of alpha, beta and gamma subunits. The cofactor is heme b.

It localises to the periplasm. In terms of biological role, may transfer electrons to the iron-sulfur centers of DdhB. The chain is Dimethylsulfide dehydrogenase subunit gamma (ddhC) from Rhodovulum sulfidophilum (Rhodobacter sulfidophilus).